Consider the following 90-residue polypeptide: Large ribosomal subunit protein uL23c (90 aa).

Belongs to the universal ribosomal protein uL23 family. Part of the 50S ribosomal subunit.

It localises to the plastid. Its subcellular location is the chloroplast. Binds to 23S rRNA. The polypeptide is Large ribosomal subunit protein uL23c (rpl23) (Oltmannsiellopsis viridis (Marine flagellate)).